An 832-amino-acid chain; its full sequence is WD repeat-containing protein 75 (832 aa).

WD repeat units follow at residues 4–43 (QCQI…KVYS), 47–86 (EECI…KLWD), 90–131 (GILI…QLVS), 145–184 (KEIS…YYFK), 193–230 (LKAT…RLWR), 236–275 (KEYT…VQWP), 278–317 (SEEK…SIID), 323–361 (SGII…QFYS), 375–424 (QQEF…KLWE), 431–477 (SFVL…KVWM), 490–528 (SWLC…TVWE), 532–572 (WDLK…CCWN), and 577–614 (ALEW…FLFQ). The interval 764-798 (SQSTEESKEDEEMKSEHSEADSSDETEEMESQKRF) is disordered.

Component of the proposed t-UTP subcomplex of the ribosomal small subunit (SSU) processome. SSU processome is composed of more than 70 proteins and the RNA chaperone small nucleolar RNA (snoRNA) U3.

Its subcellular location is the nucleus. It localises to the nucleolus. Ribosome biogenesis factor. Part of the small subunit (SSU) processome, first precursor of the small eukaryotic ribosomal subunit. During the assembly of the SSU processome in the nucleolus, many ribosome biogenesis factors, an RNA chaperone and ribosomal proteins associate with the nascent pre-rRNA and work in concert to generate RNA folding, modifications, rearrangements and cleavage as well as targeted degradation of pre-ribosomal RNA by the RNA exosome. Involved in nucleolar processing of pre-18S ribosomal RNA. Required for optimal pre-ribosomal RNA transcription by RNA polymerase I. The chain is WD repeat-containing protein 75 (wdr75) from Xenopus laevis (African clawed frog).